Reading from the N-terminus, the 314-residue chain is tRNA uridine(34) hydroxylase (314 aa).

In terms of domain architecture, Rhodanese spans 135–229 (ADPETLVIDT…YLEQIPAEES (95 aa)). The active-site Cysteine persulfide intermediate is C189.

The protein belongs to the TrhO family.

It catalyses the reaction uridine(34) in tRNA + AH2 + O2 = 5-hydroxyuridine(34) in tRNA + A + H2O. Functionally, catalyzes oxygen-dependent 5-hydroxyuridine (ho5U) modification at position 34 in tRNAs. The protein is tRNA uridine(34) hydroxylase of Sinorhizobium fredii (strain NBRC 101917 / NGR234).